The following is a 349-amino-acid chain: MSGATLEAYLASCTARGDDLSRDVAAVIQRLAKAALDIRKLVNQGALGTAFNGTHGGSNTDGDLQKDLDILCDDQFLTCLQGAPVACYASEELENPVLLDPSARLAVAIDPLDGSSNIDNNVSIGTIFSVLPAAKGPDVDPSQSFLQPGNRQLAAGFFIYGPQTALVLSLGKGTEIFIFSSRLGCFVEAYKSAIIPERAHEFAINMSNYRHWEEAIRLYVDDCLAGSEGPRERDFNMRWIASLVAETYRILIRGGIFLYPADGRKGYSQGRLRLVYEANPIAFIIENAGGAATTSIDRILDLVPENLHQRVPLVFGSRREVARITRYHVDPNMIGERAPLFGKRGLFRA.

Mg(2+) contacts are provided by E91, D110, L112, and D113. Residues 113–116 and N205 each bind substrate; that span reads DGSS. E277 is a Mg(2+) binding site.

Belongs to the FBPase class 1 family. As to quaternary structure, homotetramer. Mg(2+) is required as a cofactor.

Its subcellular location is the cytoplasm. The catalysed reaction is beta-D-fructose 1,6-bisphosphate + H2O = beta-D-fructose 6-phosphate + phosphate. It participates in carbohydrate biosynthesis; gluconeogenesis. This chain is Fructose-1,6-bisphosphatase class 1, found in Rhizobium meliloti (strain 1021) (Ensifer meliloti).